The primary structure comprises 311 residues: Ribosomal RNA small subunit methyltransferase H (311 aa).

Residues 33–35 (AGH), D53, F80, D101, and Q108 each bind S-adenosyl-L-methionine.

The protein belongs to the methyltransferase superfamily. RsmH family.

It localises to the cytoplasm. The catalysed reaction is cytidine(1402) in 16S rRNA + S-adenosyl-L-methionine = N(4)-methylcytidine(1402) in 16S rRNA + S-adenosyl-L-homocysteine + H(+). Its function is as follows. Specifically methylates the N4 position of cytidine in position 1402 (C1402) of 16S rRNA. This chain is Ribosomal RNA small subunit methyltransferase H, found in Alkaliphilus oremlandii (strain OhILAs) (Clostridium oremlandii (strain OhILAs)).